The primary structure comprises 505 residues: Putative thymidine phosphorylase (505 aa).

The protein belongs to the thymidine/pyrimidine-nucleoside phosphorylase family. Type 2 subfamily.

The enzyme catalyses thymidine + phosphate = 2-deoxy-alpha-D-ribose 1-phosphate + thymine. This is Putative thymidine phosphorylase from Hahella chejuensis (strain KCTC 2396).